The primary structure comprises 545 residues: MSGMWVHPGRTLIWALWVLAAVIKGPAADAPVRSTRLGWVRGKQTTVLGSTVPVNMFLGIPYAAPPLGPLRFKQPKPALPGNDFRNATSYPKLCFQDLEWLVSYQHVLKVRYPKLEASEDCLYLNIYAPAHADNGSNLPVMVWFPGGAFKMGSASSFDGSALAAYEDVLIVTTQYRLGIFGFFDTGDEHARGNWALLDQVAALTWVRDNIEFFGGDPRSVTIFGESAGAISVSSLILSPIANGLFHKAIMESGVAILPLLMRPPGDERKKDLQVLARICGCHASDSAALLQCLRAKPSEELMDISKKLTFSIPVIDDFFFPDEPVALLTQKAFNSVPSIIGVNNHECAFLLSTEFSEILGGSNRSLALYLVHTFLNIPTQYLHLVADHYFYNKHSPVEIRDSFLDLLGDVLFVVPGVVTARYHRDAGAPVYFYEFQHPPQCLNDTRPAFVKADHSDEIRFVFGGAFLKGDIVMFEGATEEEKLLSRKMMRYWANFARTGDPNGEGVPLWPAYTQSEQYLKLDLSVSVGQKLKEQEVEFWMNTIVP.

Positions 1 to 28 are cleaved as a signal peptide; it reads MSGMWVHPGRTLIWALWVLAAVIKGPAA. Asparagine 86 is a glycosylation site (N-linked (GlcNAc...) (complex) asparagine). A disulfide bond links cysteine 94 and cysteine 121. N-linked (GlcNAc...) asparagine glycosylation occurs at asparagine 134. Serine 226 serves as the catalytic Acyl-ester intermediate. Cysteine 281 and cysteine 292 are joined by a disulfide. Glutamate 346 functions as the Charge relay system in the catalytic mechanism. N-linked (GlcNAc...) asparagine glycans are attached at residues asparagine 363 and asparagine 443. The active-site Charge relay system is histidine 454.

Belongs to the type-B carboxylesterase/lipase family. N-glycosylated; contains a fucosylated complex carbohydrate. In terms of tissue distribution, present at high level in urine. Expressed in the kidney proximal straight tubular cells and is secreted from the apical compartment of the cells into the urine (at protein level). In mature cats, it is present at higher level in intact males than in castrated males or in intact or spayed females.

The protein resides in the secreted. It carries out the reaction a carboxylic ester + H2O = an alcohol + a carboxylate + H(+). Carboxylesterase present at high level in urine that regulates production of felinine, a probable pheromone precursor. Probably acts by hydrolyzing the peptide bond of the felinine precursor 3-methylbutanol cyteinylglycine, producing felinine and glycine in cat urine. The chain is Carboxylesterase 5A (CES5A) from Felis catus (Cat).